The primary structure comprises 643 residues: Complement component C1q receptor (643 aa).

The N-terminal stretch at 1-23 is a signal peptide; sequence MVTSTGLLLLLGLLGQLWAGAAA. The Extracellular segment spans residues 24–571; that stretch reads DSEAVVCEGT…HSDSDTDGQK (548 aa). A C-type lectin domain is found at 31-173; that stretch reads EGTACYTAHW…CGTPDAPGNS (143 aa). Intrachain disulfides connect Cys-140/Cys-164, Cys-261/Cys-272, Cys-268/Cys-282, Cys-284/Cys-297, Cys-303/Cys-314, Cys-308/Cys-325, Cys-327/Cys-340, Cys-346/Cys-355, Cys-351/Cys-364, Cys-366/Cys-380, Cys-386/Cys-397, Cys-393/Cys-406, Cys-408/Cys-422, Cys-428/Cys-437, Cys-433/Cys-446, and Cys-448/Cys-461. EGF-like domains follow at residues 257–298 and 299–341; these read PKFG…VTCA and SRNP…VHCV. An N-linked (GlcNAc...) asparagine glycan is attached at Asn-322. The EGF-like 3; calcium-binding domain maps to 342–381; sequence DIDECEDSPCDQECINTPGGFHCECWVGYQSSGSKEEACE. The EGF-like 4; calcium-binding domain occupies 382-423; that stretch reads DVDECTAAYSPCAQGCTNTDGSFYCSCKEGYIMSGEDSTQCE. One can recognise an EGF-like 5; calcium-binding domain in the interval 424-462; sequence DIDECLGNPCDTLCINTDGSFRCGCPAGFELAPNGVSCT. The segment at 469–517 is disordered; that stretch reads ELPARPPQKEDKGDGKESTVPLTEMPGSLNGSKDVSNRAQTTDLSIQSD. Positions 475-485 are enriched in basic and acidic residues; the sequence is PQKEDKGDGKE. Polar residues predominate over residues 497–517; sequence LNGSKDVSNRAQTTDLSIQSD. Asn-498 is a glycosylation site (N-linked (GlcNAc...) asparagine). A helical transmembrane segment spans residues 572-592; sequence LLLFYILGTVVAISLLLALAL. The Cytoplasmic segment spans residues 593-643; sequence GLLIYLKRKAKKEEIKEKKAQNAADSYSWIPERAESRAPENQYSPTPGTDC. The segment at 606–643 is disordered; it reads EIKEKKAQNAADSYSWIPERAESRAPENQYSPTPGTDC. Ser-618 bears the Phosphoserine mark. 2 positions are modified to phosphotyrosine: Tyr-619 and Tyr-635. Positions 631–643 are enriched in polar residues; it reads PENQYSPTPGTDC.

In terms of assembly, homodimer. Interacts with C1QBP; the association may represent a cell surface C1q receptor. Interacts with surfactant protein A/SFTPA1. Interacts with multimerin-2/MMRN2. Interacts with DAG1; this interaction plays an important role in endothelial cell migration. Interacts with CBL. Interacts with IGFBP7. Interacts with VEGFR2. N- and O-glycosylated. Post-translationally, phosphorylated on Tyr-619 and Tyr-635 by SRC; these phosphorylations promote endothelial cell adhesion and migration. As to expression, widely expressed. Highly expressed in lung and heart. Expressed at lower level in brain, thymus, liver, spleen, intestine, kidney, adrenal gland, muscle and testis. Expressed on endothelial cells, platelets, undifferentiated monocytes and circulating natural killer cells.

It is found in the cell membrane. Cell surface receptor that plays a role in various physiological processes including inflammation, phagocytosis, and cell adhesion. Plays a role in phagocytosis and enhances the uptake of apoptotic cells and immune complexes by acting as a receptor for defense collagens including surfactant protein A/SFTPA1, C1q, and mannose-binding lectin (MBL2). Plays a role in the regulation of endothelial cell function and adhesion by activating angiogenesis. Mechanistically, exerts its angiogenic function by associating with beta-dystroglycan, leading to SRC-dependent phosphorylation and subsequent recruitment of CBL. In turn, CBL provides a docking site for downstream signaling components, such as CRKL to enhance cell migration. Participates in angiogenesis also by acting as a receptor for the ECM pan-endothelial glycoprotein multimerin-2/MMRN2 and IGFBP7 ligands. Both ligands play a non-redundant role in CD93-mediated endothelial cell function. Acts as a key regulator of endothelial barrier function through modulating VEGFR2 function. The chain is Complement component C1q receptor (Cd93) from Rattus norvegicus (Rat).